Here is a 306-residue protein sequence, read N- to C-terminus: Phosphoribosylaminoimidazole-succinocarboxamide synthase (306 aa).

Ser-2 is modified (N-acetylserine).

Belongs to the SAICAR synthetase family. Monomer.

It carries out the reaction 5-amino-1-(5-phospho-D-ribosyl)imidazole-4-carboxylate + L-aspartate + ATP = (2S)-2-[5-amino-1-(5-phospho-beta-D-ribosyl)imidazole-4-carboxamido]succinate + ADP + phosphate + 2 H(+). It participates in purine metabolism; IMP biosynthesis via de novo pathway; 5-amino-1-(5-phospho-D-ribosyl)imidazole-4-carboxamide from 5-amino-1-(5-phospho-D-ribosyl)imidazole-4-carboxylate: step 1/2. Catalyzes the reaction of 4-carboxy-5-aminoimidazole ribotide (CAIR) and aspartic acid with the formation of N-succinyl-5-amino-imidazole-4-carboxamide ribotide (SAICAR) in the purine biosynthesis pathway. This is Phosphoribosylaminoimidazole-succinocarboxamide synthase (ADE1) from Saccharomyces cerevisiae (strain ATCC 204508 / S288c) (Baker's yeast).